The following is a 252-amino-acid chain: Acyltransferase PGAP2 (252 aa).

Residues 1-22 (MVPVGPERGANSLFSLRFTTFA) are Cytoplasmic-facing. A helical membrane pass occupies residues 23-43 (VGTVSLPLFAFLFCIVWSLLF). Residues 44 to 77 (NFSETTATHCHVPNYLPSVSAAIGGETPQRYIWR) lie on the Lumenal side of the membrane. Residues 78–98 (LCIGLHSAPRFLVGVAYLHYY) traverse the membrane as a helical segment. The Cytoplasmic segment spans residues 99-111 (QGTPCSSPAYPRL). A helical transmembrane segment spans residues 112–132 (CHLNFLLNCCEIFFLILLTYV). The Lumenal portion of the chain corresponds to 133–142 (SSSENYEVHK). The chain crosses the membrane as a helical span at residues 143–163 (LGFMAFMLFSVGYMFVTCSLW). Topologically, residues 164-184 (RVARKGSGSLEERTSYAWKKR) are cytoplasmic. Residues 185–205 (LFGFYLLMFLSSILVYIWHNM) traverse the membrane as a helical segment. Over 206 to 208 (YCE) the chain is Lumenal. A helical transmembrane segment spans residues 209–229 (AGVYTVFALLEYLVVLSNMGF). At 230–252 (HMTAWWDFGNKELMICSPGDKRI) the chain is on the cytoplasmic side.

Belongs to the PGAP2 family.

Its subcellular location is the golgi apparatus membrane. Its function is as follows. Involved in the fatty acid remodeling steps of GPI-anchor maturation where the unsaturated acyl chain at sn-2 of inositol phosphate is replaced by a saturated stearoyl chain. May catalyze the second step of the fatty acid remodeling, by reacylating a lyso-GPI intermediate at sn-2 of inositol phosphate by a saturated chain. The fatty acid remodeling steps is critical for the integration of GPI-APs into lipid rafts. This is Acyltransferase PGAP2 from Xenopus tropicalis (Western clawed frog).